The chain runs to 134 residues: MTLNLCVLTPNRIIWDSEVKEIILSTNSGQIGVLPNHAPIATAVDIGILRVRLNDQWLTMALMGGFARIGNNEITILVNDAEKGSDIDPQEAQRTLEIAEANLSRAEGKRQAIEANLALRRARTRVEAINVISY.

It belongs to the ATPase epsilon chain family. F-type ATPases have 2 components, CF(1) - the catalytic core - and CF(0) - the membrane proton channel. CF(1) has five subunits: alpha(3), beta(3), gamma(1), delta(1), epsilon(1). CF(0) has three main subunits: a, b and c.

The protein localises to the plastid. The protein resides in the chloroplast thylakoid membrane. Its function is as follows. Produces ATP from ADP in the presence of a proton gradient across the membrane. The polypeptide is ATP synthase epsilon chain, chloroplastic (Liriodendron tulipifera (Tuliptree)).